We begin with the raw amino-acid sequence, 294 residues long: Non-selective voltage-gated ion channel VDAC2 (294 aa).

A2 is modified (N-acetylalanine). ATP is bound by residues K23 and K31. At K31 the chain carries N6-acetyllysine; alternate. An N6-succinyllysine; alternate modification is found at K31. K31 is covalently cross-linked (Glycyl lysine isopeptide (Lys-Gly) (interchain with G-Cter in ubiquitin); alternate). Beta stranded transmembrane passes span 37–46 (LVKLDVKTKS) and 50–58 (VEFSTSGSS). K64 participates in a covalent cross-link: Glycyl lysine isopeptide (Lys-Gly) (interchain with G-Cter in ubiquitin). A beta stranded transmembrane segment spans residues 65-75 (VTGTLETKYKW). Y78 bears the Phosphotyrosine mark. The next 3 beta stranded transmembrane spans lie at 80 to 87 (LTFTEKWN), 91 to 100 (TLGTEIAIED), and 106 to 115 (LKLTFDTTFS). T118 is modified (phosphothreonine). Position 120 is an N6-acetyllysine; alternate (K120). A Glycyl lysine isopeptide (Lys-Gly) (interchain with G-Cter in ubiquitin); alternate cross-link involves residue K120. A Glycyl lysine isopeptide (Lys-Gly) (interchain with G-Cter in ubiquitin) cross-link involves residue K121. 4 beta stranded membrane-spanning segments follow: residues 122-131 (SGKIKSSYKR), 134-141 (VNLGCDVD), 148-156 (AIHGSAVFG), and 161-169 (LAGYQMTFD). Residue K172 forms a Glycyl lysine isopeptide (Lys-Gly) (interchain with G-Cter in ubiquitin) linkage. A run of 6 beta stranded transmembrane segments spans residues 174-186 (KLTRNNFAVGYRT), 189-196 (FQLHTNVN), 200-209 (EFGGSIYQKV), 213-222 (LDTSVNLAWT), 229-238 (RFGIAAKYQL), and 242-249 (ASISAKVN). Phosphoserine is present on S251. NAD(+) is bound by residues 253-255 (LIG) and 271-275 (SALVD). Transmembrane regions (beta stranded) follow at residues 253–262 (LIGVGYTQTL) and 265–274 (GVKLTLSALV). K277 bears the N6-acetyllysine; alternate mark. Residue K277 forms a Glycyl lysine isopeptide (Lys-Gly) (interchain with G-Cter in ubiquitin); alternate linkage. Residues 284–293 (HKLGLALELE) traverse the membrane as a beta stranded segment.

This sequence belongs to the eukaryotic mitochondrial porin family. As to quaternary structure, monomer, homodimer and higher order oligomers; formation of higher order structures is necessary for scramblase activity. Interacts with ARMC12 in a TBC1D21-dependent manner. Interacts with KLC3. Interacts with SPATA33. Interacts with PPP3CC in a SPATA33-dependent manner. Post-translationally, ubiquitinated by PRKN during mitophagy, leading to its degradation and enhancement of mitophagy. Deubiquitinated by USP30.

It is found in the mitochondrion outer membrane. The protein localises to the membrane. The enzyme catalyses chloride(in) = chloride(out). The catalysed reaction is K(+)(in) = K(+)(out). It carries out the reaction a 1,2-diacyl-sn-glycero-3-phospho-L-serine(in) = a 1,2-diacyl-sn-glycero-3-phospho-L-serine(out). It catalyses the reaction a 1,2-diacyl-sn-glycero-3-phosphocholine(in) = a 1,2-diacyl-sn-glycero-3-phosphocholine(out). The enzyme catalyses a 1,2-diacyl-sn-glycero-3-phospho-(1D-myo-inositol)(in) = a 1,2-diacyl-sn-glycero-3-phospho-(1D-myo-inositol)(out). In terms of biological role, non-selective voltage-gated ion channel that mediates the transport of anions and cations through the mitochondrion outer membrane and plasma membrane. The channel adopts an open conformation at zero mV and a closed conformation at both positive and negative potentials. There are two populations of channels; the main that functions in a lower open-state conductance with lower ion selectivity, that switch, in a voltage-dependent manner, from the open to a low-conducting 'closed' state and the other that has a normal ion selectivity in the typical high conductance, 'open' state. Binds various lipids, including the sphingolipid ceramide, the phospholipid phosphatidylcholine, and the sterols cholesterol and oxysterol. Binding of ceramide promotes the mitochondrial outer membrane permeabilization (MOMP) apoptotic pathway. Its function is as follows. Catalyzes the scrambling of phospholipids across the outer mitochondrial membrane; the mechanism is unrelated to channel activity and is capable of translocating both anionic and zwitterionic phospholipids. The protein is Non-selective voltage-gated ion channel VDAC2 of Sus scrofa (Pig).